We begin with the raw amino-acid sequence, 378 residues long: GTP cyclohydrolase-2 (378 aa).

Residues 1–180 (MEEVSSHVKS…IKDMIEFRIK (180 aa)) are DHBP synthase-like. Positions 181-378 (SEKIVERVIE…KMGHLICFND (198 aa)) are GTP cyclohydrolase II. Position 229–233 (229–233 (RIHSE)) interacts with GTP. Zn(2+) contacts are provided by C234, C245, and C247. Residues Q250, 273–275 (EGR), and T295 each bind GTP. The Proton acceptor role is filled by D307. R309 (nucleophile) is an active-site residue. Residues T330 and K335 each contribute to the GTP site.

This sequence in the N-terminal section; belongs to the DHBP synthase family. In the C-terminal section; belongs to the GTP cyclohydrolase II family. Requires Zn(2+) as cofactor.

The catalysed reaction is GTP + 4 H2O = 2,5-diamino-6-hydroxy-4-(5-phosphoribosylamino)-pyrimidine + formate + 2 phosphate + 3 H(+). The protein operates within cofactor biosynthesis; riboflavin biosynthesis; 5-amino-6-(D-ribitylamino)uracil from GTP: step 1/4. Catalyzes the conversion of GTP to 2,5-diamino-6-ribosylamino-4(3H)-pyrimidinone 5'-phosphate (DARP), formate and pyrophosphate. The chain is GTP cyclohydrolase-2 (ribA) from Archaeoglobus fulgidus (strain ATCC 49558 / DSM 4304 / JCM 9628 / NBRC 100126 / VC-16).